The primary structure comprises 134 residues: Peroxisomal testis-specific protein 1 (134 aa).

Positions 131-134 (NHLL) match the Microbody targeting signal motif.

Its subcellular location is the peroxisome. The sequence is that of Peroxisomal testis-specific protein 1 (PXT1) from Homo sapiens (Human).